The sequence spans 224 residues: Germin-like protein 8-10 (224 aa).

The N-terminal stretch at 1-22 is a signal peptide; that stretch reads MASPSICLLAALLALVSWQAIA. Cysteines 32 and 47 form a disulfide. One can recognise a Cupin type-1 domain in the interval 62–212; the sequence is AMLDTPRKTN…AFQVEKGTID (151 aa). Asparagine 76 carries N-linked (GlcNAc...) asparagine glycosylation. Residues histidine 109, histidine 111, and glutamate 116 each contribute to the Mn(2+) site. Asparagine 135 carries N-linked (GlcNAc...) asparagine glycosylation. Residue histidine 157 coordinates Mn(2+).

The protein belongs to the germin family. In terms of assembly, oligomer (believed to be a pentamer but probably hexamer).

Its subcellular location is the secreted. The protein localises to the extracellular space. The protein resides in the apoplast. Its function is as follows. Plays a role in broad-spectrum disease resistance. Probably has no oxalate oxidase activity even if the active site is conserved. The chain is Germin-like protein 8-10 (GLP2) from Oryza sativa subsp. japonica (Rice).